A 504-amino-acid polypeptide reads, in one-letter code: DnaJ homolog subfamily C member 3 (504 aa).

An N-terminal signal peptide occupies residues 1–31 (MVAPGSVGSRLGAVFPFLLVLVDLQYEGAEC). 9 TPR repeats span residues 37–70 (VEKHLELGKKLLAAGQLADALSQFHAAVDGDPDN), 72–104 (IAYYRRATVFLAMGKSKAALPDLTKVIALKMDF), 105–138 (TAARLQRGHLLLKQGKLDEAEDDFKKVLKSNPSE), 154–187 (MQRLRSQALDAFDGADYTAAITFLDKILEVCVWD), 188–221 (AELRELRAECFIKEGEPRKAISDLKAASKLKSDN), 222–255 (TEAFYKISTLYYQLGDHELSLSEVRECLKLDQDH), 268–301 (LNKLIESAEELIRDGRYTDATSKYESVMKTEPSV), 306–339 (VRSKERICHCFSKDEKPVEAIRICSEVLQMEPDN), and 340–373 (VNALKDRAEAYLIEEMYDEAIQDYEAAQEHNEND). A disulfide bond links Cys248 and Cys258. Ser274 is subject to Phosphoserine. Cys313 and Cys329 are disulfide-bonded. The flexible linker stretch occupies residues 375 to 393 (QIREGLEKAQRLLKQSQKR). Residues 394–462 (DYYKILGVKR…EMRKKFDDGE (69 aa)) form the J domain. Residues 451–481 (DPEMRKKFDDGEDPLDAESQQGGGGNPFHRS) are disordered.

As to quaternary structure, interacts with EIF2AK4/GCN2; this interaction occurs under endoplasmic reticulum (ER) stress, hypothermic and amino acid starving stress conditions and inhibits EIF2AK4/GCN2 kinase activity. Interacts with EIF2AK3. Interacts with EIF2AK2. Forms a trimeric complex with DNAJB1 and HSPA8. Interacts with THAP12. Widely expressed, with high level in the liver.

It localises to the endoplasmic reticulum. In terms of biological role, involved in the unfolded protein response (UPR) during endoplasmic reticulum (ER) stress. Acts as a negative regulator of the EIF2AK4/GCN2 kinase activity by preventing the phosphorylation of eIF-2-alpha at 'Ser-52' and hence attenuating general protein synthesis under ER stress, hypothermic and amino acid starving stress conditions. Co-chaperone of HSPA8/HSC70, it stimulates its ATPase activity. May inhibit both the autophosphorylation of EIF2AK2/PKR and the ability of EIF2AK2 to catalyze phosphorylation of the EIF2A. May inhibit EIF2AK3/PERK activity. This is DnaJ homolog subfamily C member 3 (Dnajc3) from Mus musculus (Mouse).